The sequence spans 105 residues: Signal peptidase complex subunit 1 (105 aa).

Residues 1 to 32 (MDGMIAMLPAPLQKLSSHIDFQGQKVAERTYQ) lie on the Cytoplasmic side of the membrane. A helical membrane pass occupies residues 33-53 (VILTIAGIIGFLVGFWTQQLS). The Lumenal segment spans residues 54–56 (YAM). A helical membrane pass occupies residues 57-77 (FTVLGASAFTALIILPPWPFL). Residues 78–105 (FRKNPIVWHTPAEPQESGDKKKETKKTK) are Cytoplasmic-facing.

The protein belongs to the SPCS1 family. Component of the signal peptidase complex (SPC) composed of a catalytic subunit sec-11 and three accessory subunits spcs-1, spcs-2 and spcs-3. The complex induces a local thinning of the ER membrane which is used to measure the length of the signal peptide (SP) h-region of protein substrates. This ensures the selectivity of the complex towards h-regions shorter than 18-20 amino acids.

Its subcellular location is the endoplasmic reticulum membrane. Functionally, component of the signal peptidase complex (SPC) which catalyzes the cleavage of N-terminal signal sequences from nascent proteins as they are translocated into the lumen of the endoplasmic reticulum. Dispensable for SPC enzymatic activity. The protein is Signal peptidase complex subunit 1 of Caenorhabditis elegans.